We begin with the raw amino-acid sequence, 126 residues long: Fluoride-specific ion channel FluC (126 aa).

4 consecutive transmembrane segments (helical) span residues 6–26 (FVAVGVGAAAGAWLRWGFSVL), 36–56 (YGTLAANLLGGYLIGLAVGFF), 69–89 (LAITGFLGGLTTFSTFSSEVV), and 99–119 (WAAMHLLLHLGGSLLLTALGL). The Na(+) site is built by Gly76 and Thr79.

Belongs to the fluoride channel Fluc/FEX (TC 1.A.43) family.

Its subcellular location is the cell inner membrane. The catalysed reaction is fluoride(in) = fluoride(out). Na(+) is not transported, but it plays an essential structural role and its presence is essential for fluoride channel function. Its function is as follows. Fluoride-specific ion channel. Important for reducing fluoride concentration in the cell, thus reducing its toxicity. This chain is Fluoride-specific ion channel FluC, found in Cupriavidus taiwanensis (strain DSM 17343 / BCRC 17206 / CCUG 44338 / CIP 107171 / LMG 19424 / R1) (Ralstonia taiwanensis (strain LMG 19424)).